The chain runs to 291 residues: Ribosomal RNA small subunit methyltransferase H (291 aa).

Residues glycine 31 to histidine 33, aspartate 50, phenylalanine 77, aspartate 98, and glutamine 105 contribute to the S-adenosyl-L-methionine site.

Belongs to the methyltransferase superfamily. RsmH family.

The protein localises to the cytoplasm. The enzyme catalyses cytidine(1402) in 16S rRNA + S-adenosyl-L-methionine = N(4)-methylcytidine(1402) in 16S rRNA + S-adenosyl-L-homocysteine + H(+). Specifically methylates the N4 position of cytidine in position 1402 (C1402) of 16S rRNA. The chain is Ribosomal RNA small subunit methyltransferase H from Endomicrobium trichonymphae.